Reading from the N-terminus, the 305-residue chain is UDP-N-acetylenolpyruvoylglucosamine reductase 2 (305 aa).

Residues 33–197 form the FAD-binding PCMH-type domain; the sequence is VGGKADVFVA…LEARFELEEG (165 aa). Arg176 is a catalytic residue. The Proton donor role is filled by Ser226. Glu296 is an active-site residue.

This sequence belongs to the MurB family. FAD serves as cofactor.

The protein resides in the cytoplasm. The catalysed reaction is UDP-N-acetyl-alpha-D-muramate + NADP(+) = UDP-N-acetyl-3-O-(1-carboxyvinyl)-alpha-D-glucosamine + NADPH + H(+). Its pathway is cell wall biogenesis; peptidoglycan biosynthesis. Functionally, cell wall formation. The polypeptide is UDP-N-acetylenolpyruvoylglucosamine reductase 2 (murB2) (Bacillus anthracis).